Here is a 547-residue protein sequence, read N- to C-terminus: Chaperonin GroEL (547 aa).

Residues 30-33 (TLGP), lysine 51, 87-91 (DGTTT), glycine 415, and aspartate 496 contribute to the ATP site.

It belongs to the chaperonin (HSP60) family. As to quaternary structure, forms a cylinder of 14 subunits composed of two heptameric rings stacked back-to-back. Interacts with the co-chaperonin GroES.

It is found in the cytoplasm. The enzyme catalyses ATP + H2O + a folded polypeptide = ADP + phosphate + an unfolded polypeptide.. Together with its co-chaperonin GroES, plays an essential role in assisting protein folding. The GroEL-GroES system forms a nano-cage that allows encapsulation of the non-native substrate proteins and provides a physical environment optimized to promote and accelerate protein folding. This is Chaperonin GroEL from Actinobacillus succinogenes (strain ATCC 55618 / DSM 22257 / CCUG 43843 / 130Z).